The sequence spans 520 residues: MMICLLWISVAILVVIHWIYKVNKDYNILAFFARRVQTKDGKPLDSLVPMIKGRTVFANCFDLLGKDTDQVFTHLRQLAKNSGDSYLQYSMGFSNFNVIDAHNAANILNHPNLITKGVIYNFLHPFLRTGVLTATEKKWHTRRSMLTRTFHLDILNQFQEIFIAESLKFVSQFQGQNEVVVSLKDRISRFTLNSICETAMGIKLDEMAEKGDRYRANFHIIDEGLTRRIVNPLYWDDCVYNMFTGHKYNAALKVVHEFSREIIAKRRVLLEEELENRRATQTADDDICVIRKKRFAMLDTLICAEKDGLIDDIGISEEVDTLMAEGYDTTSIGLVFGLMNMSLYAAEQELCYQEIQEHILDDLSNLNLSQLSKLNYLGYFIKETMRLYPSIPIMGRQTLQETELENGLILPKRSQINIHVFDIHRNPKYWESPEEFRPERFLPQNCLKRHPYAYIPFSAGQRNCIGQKYAMQEMKTLMVVILKHFKILPVIDPKSIVFQVGITLRFKNKIKVKLVRRNCV.

The heme site is built by glutamate 325 and cysteine 464.

The protein belongs to the cytochrome P450 family. Heme is required as a cofactor.

It localises to the endoplasmic reticulum membrane. The protein localises to the microsome membrane. Functionally, may be involved in the metabolism of insect hormones and in the breakdown of synthetic insecticides. The sequence is that of Probable cytochrome P450 4p2 (Cyp4p2) from Drosophila melanogaster (Fruit fly).